The primary structure comprises 405 residues: Argininosuccinate synthase (405 aa).

Residues 10 to 18 (AYSGGLDTS) and Ala37 contribute to the ATP site. L-citrulline is bound by residues Tyr88 and Ser93. Residue Gly118 participates in ATP binding. L-aspartate-binding residues include Thr120, Asn124, and Asp125. Asn124 is an L-citrulline binding site. Arg128, Ser179, Ser188, Glu264, and Tyr276 together coordinate L-citrulline.

Belongs to the argininosuccinate synthase family. Type 1 subfamily. Homotetramer.

It localises to the cytoplasm. It catalyses the reaction L-citrulline + L-aspartate + ATP = 2-(N(omega)-L-arginino)succinate + AMP + diphosphate + H(+). The protein operates within amino-acid biosynthesis; L-arginine biosynthesis; L-arginine from L-ornithine and carbamoyl phosphate: step 2/3. The protein is Argininosuccinate synthase of Pseudomonas fluorescens (strain ATCC BAA-477 / NRRL B-23932 / Pf-5).